An 80-amino-acid polypeptide reads, in one-letter code: Protein UL148B (80 aa).

A helical transmembrane segment spans residues 10–30 (AICVGLVMGVTVIASCALLVF).

Its subcellular location is the host membrane. In Homo sapiens (Human), this protein is Protein UL148B (UL148B).